The following is a 368-amino-acid chain: Germination protease (368 aa).

Residues methionine 1–aspartate 16 constitute a propeptide that is removed on maturation.

It belongs to the peptidase A25 family. As to quaternary structure, homotetramer. Post-translationally, autoproteolytically processed. The inactive tetrameric zymogen termed p46 autoprocesses to a smaller form termed p41, which is active only during spore germination.

It catalyses the reaction Endopeptidase action with P4 Glu or Asp, P1 preferably Glu &gt; Asp, P1' hydrophobic and P2' Ala.. Its function is as follows. Initiates the rapid degradation of small, acid-soluble proteins during spore germination. The chain is Germination protease from Bacillus velezensis (strain DSM 23117 / BGSC 10A6 / LMG 26770 / FZB42) (Bacillus amyloliquefaciens subsp. plantarum).